A 156-amino-acid chain; its full sequence is Arginine repressor (156 aa).

The protein belongs to the ArgR family.

It localises to the cytoplasm. It functions in the pathway amino-acid biosynthesis; L-arginine biosynthesis [regulation]. In terms of biological role, regulates arginine biosynthesis genes. This is Arginine repressor from Shewanella pealeana (strain ATCC 700345 / ANG-SQ1).